The sequence spans 393 residues: Protein FAM47E (393 aa).

A coiled-coil region spans residues 326–354 (VSHKAQEENFKKELQEQEELLADLHGTVA).

The protein belongs to the FAM47 family. Interacts with PRMT5; the interaction is direct. Interacts with WDR77.

The protein localises to the nucleus. Its subcellular location is the chromosome. It is found in the cytoplasm. In terms of biological role, promotes histone methylation by localizing the arginine methyltransferase PRMT5 to chromatin. The chain is Protein FAM47E (FAM47E) from Homo sapiens (Human).